A 470-amino-acid polypeptide reads, in one-letter code: Ribulose bisphosphate carboxylase large chain (470 aa).

Substrate is bound by residues Asn-115 and Thr-165. The active-site Proton acceptor is the Lys-167. Lys-169 contributes to the substrate binding site. 3 residues coordinate Mg(2+): Lys-193, Asp-195, and Glu-196. Lys-193 carries the post-translational modification N6-carboxylysine. His-286 acts as the Proton acceptor in catalysis. Residues Arg-287, His-319, and Ser-371 each coordinate substrate.

It belongs to the RuBisCO large chain family. Type I subfamily. As to quaternary structure, heterohexadecamer of 8 large chains and 8 small chains. Mg(2+) is required as a cofactor.

The protein localises to the carboxysome. The enzyme catalyses 2 (2R)-3-phosphoglycerate + 2 H(+) = D-ribulose 1,5-bisphosphate + CO2 + H2O. It carries out the reaction D-ribulose 1,5-bisphosphate + O2 = 2-phosphoglycolate + (2R)-3-phosphoglycerate + 2 H(+). In terms of biological role, ruBisCO catalyzes two reactions: the carboxylation of D-ribulose 1,5-bisphosphate, the primary event in carbon dioxide fixation, as well as the oxidative fragmentation of the pentose substrate in the photorespiration process. Both reactions occur simultaneously and in competition at the same active site. This Prochlorococcus marinus (strain NATL1A) protein is Ribulose bisphosphate carboxylase large chain.